A 100-amino-acid polypeptide reads, in one-letter code: Urease subunit gamma (100 aa).

The protein belongs to the urease gamma subunit family. In terms of assembly, heterotrimer of UreA (gamma), UreB (beta) and UreC (alpha) subunits. Three heterotrimers associate to form the active enzyme.

The protein localises to the cytoplasm. The enzyme catalyses urea + 2 H2O + H(+) = hydrogencarbonate + 2 NH4(+). The protein operates within nitrogen metabolism; urea degradation; CO(2) and NH(3) from urea (urease route): step 1/1. The protein is Urease subunit gamma of Sinorhizobium fredii (strain NBRC 101917 / NGR234).